A 55-amino-acid polypeptide reads, in one-letter code: Large ribosomal subunit protein bL33 (55 aa).

The protein belongs to the bacterial ribosomal protein bL33 family.

This is Large ribosomal subunit protein bL33 from Rhodospirillum centenum (strain ATCC 51521 / SW).